A 188-amino-acid chain; its full sequence is Ribosome-recycling factor (188 aa).

The protein belongs to the RRF family.

The protein localises to the cytoplasm. Functionally, responsible for the release of ribosomes from messenger RNA at the termination of protein biosynthesis. May increase the efficiency of translation by recycling ribosomes from one round of translation to another. This is Ribosome-recycling factor from Anaeromyxobacter sp. (strain K).